The following is a 347-amino-acid chain: Ribosomal RNA small subunit methyltransferase H (347 aa).

Residues 50-52 (GGH), D69, F96, D125, and Q132 contribute to the S-adenosyl-L-methionine site.

It belongs to the methyltransferase superfamily. RsmH family.

It localises to the cytoplasm. The enzyme catalyses cytidine(1402) in 16S rRNA + S-adenosyl-L-methionine = N(4)-methylcytidine(1402) in 16S rRNA + S-adenosyl-L-homocysteine + H(+). Its function is as follows. Specifically methylates the N4 position of cytidine in position 1402 (C1402) of 16S rRNA. This chain is Ribosomal RNA small subunit methyltransferase H, found in Corynebacterium aurimucosum (strain ATCC 700975 / DSM 44827 / CIP 107346 / CN-1) (Corynebacterium nigricans).